A 110-amino-acid chain; its full sequence is Large ribosomal subunit protein uL24 (110 aa).

It belongs to the universal ribosomal protein uL24 family. Part of the 50S ribosomal subunit.

In terms of biological role, one of two assembly initiator proteins, it binds directly to the 5'-end of the 23S rRNA, where it nucleates assembly of the 50S subunit. One of the proteins that surrounds the polypeptide exit tunnel on the outside of the subunit. The polypeptide is Large ribosomal subunit protein uL24 (Frankia alni (strain DSM 45986 / CECT 9034 / ACN14a)).